The primary structure comprises 97 residues: UPF0729 protein GD16342 (97 aa).

The segment at 64 to 97 (KPEKASVGPAEESQNPPLNAIAAETEVDESKKEI) is disordered. Ser-69 carries the phosphoserine modification.

Belongs to the UPF0729 family.

This chain is UPF0729 protein GD16342, found in Drosophila simulans (Fruit fly).